Reading from the N-terminus, the 196-residue chain is Small ribosomal subunit protein uS4c (196 aa).

Residues 15-41 are disordered; that stretch reads LGALPGLTSKRPRSGSDLKNPLRSGKR. The S4 RNA-binding domain maps to 89-150; sequence MRLDNILFRL…KQRSKALIQN (62 aa).

This sequence belongs to the universal ribosomal protein uS4 family. Part of the 30S ribosomal subunit. Contacts protein S5. The interaction surface between S4 and S5 is involved in control of translational fidelity.

The protein localises to the plastid. The protein resides in the chloroplast. One of the primary rRNA binding proteins, it binds directly to 16S rRNA where it nucleates assembly of the body of the 30S subunit. In terms of biological role, with S5 and S12 plays an important role in translational accuracy. The chain is Small ribosomal subunit protein uS4c (rps4) from Narcissus odorus (Campernelle jonquil).